The primary structure comprises 342 residues: Cytoplasmic tRNA 2-thiolation protein 1 (342 aa).

It belongs to the TtcA family. CTU1/NCS6/ATPBD3 subfamily.

Its subcellular location is the cytoplasm. It participates in tRNA modification; 5-methoxycarbonylmethyl-2-thiouridine-tRNA biosynthesis. In terms of biological role, plays a central role in 2-thiolation of mcm(5)S(2)U at tRNA wobble positions of tRNA(Lys), tRNA(Glu) and tRNA(Gln). Directly binds tRNAs and probably acts by catalyzing adenylation of tRNAs, an intermediate required for 2-thiolation. It is unclear whether it acts as a sulfurtransferase that transfers sulfur from thiocarboxylated URM1 onto the uridine of tRNAs at wobble position. This Anopheles gambiae (African malaria mosquito) protein is Cytoplasmic tRNA 2-thiolation protein 1.